Here is a 395-residue protein sequence, read N- to C-terminus: Argininosuccinate synthase (395 aa).

7 to 15 (LYSGGLDTS) is a binding site for ATP. Tyrosine 83 contacts L-citrulline. Glycine 113 is a binding site for ATP. L-aspartate is bound by residues threonine 115, asparagine 119, and aspartate 120. Asparagine 119 provides a ligand contact to L-citrulline. Residues arginine 123, serine 169, serine 178, glutamate 253, and tyrosine 265 each coordinate L-citrulline.

It belongs to the argininosuccinate synthase family. Type 1 subfamily. As to quaternary structure, homotetramer.

It localises to the cytoplasm. The enzyme catalyses L-citrulline + L-aspartate + ATP = 2-(N(omega)-L-arginino)succinate + AMP + diphosphate + H(+). It functions in the pathway amino-acid biosynthesis; L-arginine biosynthesis; L-arginine from L-ornithine and carbamoyl phosphate: step 2/3. This chain is Argininosuccinate synthase, found in Picrophilus torridus (strain ATCC 700027 / DSM 9790 / JCM 10055 / NBRC 100828 / KAW 2/3).